Consider the following 300-residue polypeptide: Protoheme IX farnesyltransferase (300 aa).

Helical transmembrane passes span 24–44, 48–68, 94–114, 118–138, 146–166, 172–192, 217–237, 239–259, and 278–298; these read VTQL…PGMV, VLLG…AINC, LQIL…LYTF, LTMW…TLLL, IVIG…AVTG, AWIL…VLAL, LHIL…FISG, SGAV…AYAW, and IVYL…RPVI.

Belongs to the UbiA prenyltransferase family. Protoheme IX farnesyltransferase subfamily.

It localises to the cell inner membrane. The enzyme catalyses heme b + (2E,6E)-farnesyl diphosphate + H2O = Fe(II)-heme o + diphosphate. It functions in the pathway porphyrin-containing compound metabolism; heme O biosynthesis; heme O from protoheme: step 1/1. In terms of biological role, converts heme B (protoheme IX) to heme O by substitution of the vinyl group on carbon 2 of heme B porphyrin ring with a hydroxyethyl farnesyl side group. The protein is Protoheme IX farnesyltransferase of Burkholderia pseudomallei (strain 1106a).